Consider the following 1052-residue polypeptide: Eukaryotic translation initiation factor 3 subunit A (1052 aa).

Positions 92–121 (LKKFIELAEKKVTEAQAKADEIQSSLESAA) form a coiled coil. Positions 339-523 (MTKAASFVLL…GVLTFDTDVF (185 aa)) constitute a PCI domain. Residues 580 to 906 (EARLQAKRAA…AEARRAARRT (327 aa)) are a coiled coil. Composition is skewed to basic and acidic residues over residues 617–632 (AATD…EETR) and 794–901 (KEVS…EARR). Disordered stretches follow at residues 617-646 (AATD…AEKQ) and 794-1052 (KEVS…QGGQ). 2 stretches are compositionally biased toward low complexity: residues 905–927 (RTGG…TAPR) and 948–964 (KEAA…AAPE). The span at 1013–1028 (GSSQPPSRTQTPGSSS) shows a compositional bias: polar residues.

The protein belongs to the eIF-3 subunit A family. In terms of assembly, component of the eukaryotic translation initiation factor 3 (eIF-3) complex.

The protein resides in the cytoplasm. Its function is as follows. RNA-binding component of the eukaryotic translation initiation factor 3 (eIF-3) complex, which is involved in protein synthesis of a specialized repertoire of mRNAs and, together with other initiation factors, stimulates binding of mRNA and methionyl-tRNAi to the 40S ribosome. The eIF-3 complex specifically targets and initiates translation of a subset of mRNAs involved in cell proliferation. The chain is Eukaryotic translation initiation factor 3 subunit A (tif32) from Aspergillus niger (strain ATCC MYA-4892 / CBS 513.88 / FGSC A1513).